The sequence spans 173 residues: Alpha-crystallin A chain (173 aa).

Position 1 is an N-acetylmethionine (Met1). Residues 1–63 (MDIAIQHPWF…RTVLDSGISE (63 aa)) are required for complex formation with BFSP1 and BFSP2. At Gln6 the chain carries Deamidated glutamine; partial. Ser45 is modified (phosphoserine). A Deamidated glutamine; partial modification is found at Gln50. Residues 52–162 (LFRTVLDSGI…GHSERAIPVS (111 aa)) enclose the sHSP domain. Lys70 carries the N6-acetyllysine modification. Residue Gln90 is modified to Deamidated glutamine; partial. Lys99 is subject to N6-acetyllysine. Position 100 (His100) interacts with Zn(2+). Asn101 is subject to Deamidated asparagine; partial. Glu102 and His107 together coordinate Zn(2+). Ser122 is modified (phosphoserine). Deamidated asparagine; partial is present on Asn123. Residues 144 to 173 (PKVPSGVDAGHSERAIPVSREEKPSSAPSS) form a disordered region. The span at 153–167 (GHSERAIPVSREEKP) shows a compositional bias: basic and acidic residues. His154 serves as a coordination point for Zn(2+). Ser162 carries O-linked (GlcNAc) serine glycosylation.

The protein belongs to the small heat shock protein (HSP20) family. As to quaternary structure, heteromer composed of three CRYAA and one CRYAB subunits. Inter-subunit bridging via zinc ions enhances stability, which is crucial as there is no protein turn over in the lens. Can also form homodimers and homotetramers (dimers of dimers) which serve as the building blocks of homooligomers. Within homooligomers, the zinc-binding motif is created from residues of 3 different molecules. His-100 and Glu-102 from one molecule are ligands of the zinc ion, and His-107 and His-154 residues from additional molecules complete the site with tetrahedral coordination geometry. Part of a complex required for lens intermediate filament formation composed of BFSP1, BFSP2 and CRYAA. Acetylation at Lys-70 may increase chaperone activity. Post-translationally, undergoes age-dependent proteolytical cleavage at the C-terminus.

The protein localises to the cytoplasm. Its subcellular location is the nucleus. In terms of biological role, contributes to the transparency and refractive index of the lens. Acts as a chaperone, preventing aggregation of various proteins under a wide range of stress conditions. Required for the correct formation of lens intermediate filaments as part of a complex composed of BFSP1, BFSP2 and CRYAA. In Pteropus poliocephalus (Grey-headed flying fox), this protein is Alpha-crystallin A chain (CRYAA).